The following is a 387-amino-acid chain: NifS-like protein (387 aa).

Pyridoxal 5'-phosphate is bound by residues Ser58 to Glu59 and Ser184 to Asn186.

This sequence belongs to the class-V pyridoxal-phosphate-dependent aminotransferase family. NifS/IscS subfamily. Requires pyridoxal 5'-phosphate as cofactor.

The protein localises to the virion. This is NifS-like protein from African swine fever virus (isolate Tick/South Africa/Pretoriuskop Pr4/1996) (ASFV).